A 379-amino-acid polypeptide reads, in one-letter code: Gonadotropin-releasing hormone II receptor (379 aa).

Residues 1–45 are Extracellular-facing; it reads MSGNTTLLLSNPTNVLDNSSVLNVSVSPPVLKWETPTFTTAARFR. Residues Asn-4, Asn-18, and Asn-23 are each glycosylated (N-linked (GlcNAc...) asparagine). A helical membrane pass occupies residues 46–65; sequence VAATLVLFVFAAASNLSVLL. The Cytoplasmic segment spans residues 66–80; the sequence is SVTRGRGRRLASHLR. A helical membrane pass occupies residues 81-100; that stretch reads PLIASLASADLVMTFVVMPL. Residues 101–118 lie on the Extracellular side of the membrane; the sequence is DAVWNVTVQWYAGDAMCK. A glycan (N-linked (GlcNAc...) asparagine) is linked at Asn-105. An intrachain disulfide couples Cys-117 to Cys-194. A helical transmembrane segment spans residues 119-140; the sequence is LMCFLKLFAMHSAAFILVVVSL. The Cytoplasmic portion of the chain corresponds to 141–167; sequence DRHHAILHPLDTLDAGRRNRRMLLTAW. A helical membrane pass occupies residues 168 to 184; that stretch reads ILSLLLASPQLFIFRAI. The Extracellular segment spans residues 185-210; the sequence is KAKGVDFVQCATHGSFQQHWQETAYN. The helical transmembrane segment at 211–230 threads the bilayer; it reads MFHFVTLYVFPLLVMSLCYT. Residues 231–283 lie on the Cytoplasmic side of the membrane; it reads RILVEINRQMHRSKDKAGEPCLRRSGTDMIPKARMKTLKMTIIIVASFVICWT. The helical transmembrane segment at 284 to 302 threads the bilayer; it reads PYYLLGIWYWFQPQMLHVI. At 303–308 the chain is on the extracellular side; that stretch reads PDYVHH. The chain crosses the membrane as a helical span at residues 309–328; the sequence is VFFVFGNLNTCCDPVIYGFF. The Cytoplasmic segment spans residues 329-379; sequence TPSFRADLSRCFCWRNQNASAKSLPHFSGHRREVSGEAESDLGSGDQPSGQ. The disordered stretch occupies residues 355–379; that stretch reads FSGHRREVSGEAESDLGSGDQPSGQ.

Belongs to the G-protein coupled receptor 1 family. In terms of processing, phosphorylated on the C-terminal cytoplasmic tail.

Its subcellular location is the cell membrane. Its function is as follows. Receptor for gonadotropin releasing hormone II (GnRH II). This receptor mediates its action by association with G proteins that activate a phosphatidylinositol-calcium second messenger system. The polypeptide is Gonadotropin-releasing hormone II receptor (Clarias gariepinus (North African catfish)).